A 344-amino-acid chain; its full sequence is Fibronectin type 3 and ankyrin repeat domains 1 protein (344 aa).

Positions 11–108 (KPHPPVVGKV…VVSVATTREP (98 aa)) constitute a Fibronectin type-III domain. 6 ANK repeats span residues 109 to 139 (ISSE…MIDV), 143 to 172 (FGFT…DVNL), 176 to 205 (SGKD…SWEA), 209 to 238 (GGCT…EVDV), 243 to 273 (SGWT…DVNI), and 277 to 306 (DGKT…DATV).

As to quaternary structure, interacts with COPS5; regulates the phosphorylation of JUN and the transcriptional activity of AP-1. Interacts with RYBP; may prevent the ubiquitin-mediated proteasomal degradation of FANK1. Polyubiquitinated. Polyubiquitination leads to proteasomal degradation. Mostly restricted to testis (at protein level), including mid to late pachytene spermatocytes (stages VI-X), diplotene spermatocytes (stage XI), meiotically dividing spermatocytes (stage XII) and spermatids in steps 1-14. Highest levels in late pachytene spermatocytes and spermatids in steps 1-9.

Its subcellular location is the nucleus. The protein resides in the cytoplasm. It is found in the cytosol. The protein localises to the cytoskeleton. It localises to the cilium basal body. Its subcellular location is the cell projection. The protein resides in the cilium. In terms of biological role, through the activation of JUN and AP-1-mediated transcription, may regulate apoptosis. The polypeptide is Fibronectin type 3 and ankyrin repeat domains 1 protein (Mus musculus (Mouse)).